We begin with the raw amino-acid sequence, 429 residues long: Adenylosuccinate synthetase (429 aa).

GTP is bound by residues 12 to 18 and 40 to 42; these read GDEGKGK and GHT. The active-site Proton acceptor is the D13. Mg(2+)-binding residues include D13 and G40. Residues 13–16, 38–41, T129, R143, Q224, T239, and R303 each bind IMP; these read DEGK and NAGH. H41 serves as the catalytic Proton donor. 299–305 contacts substrate; the sequence is VTTGRAR. GTP contacts are provided by residues R305, 331 to 333, and 413 to 415; these read KLD and GVG.

It belongs to the adenylosuccinate synthetase family. Homodimer. Mg(2+) serves as cofactor.

It localises to the cytoplasm. The catalysed reaction is IMP + L-aspartate + GTP = N(6)-(1,2-dicarboxyethyl)-AMP + GDP + phosphate + 2 H(+). It participates in purine metabolism; AMP biosynthesis via de novo pathway; AMP from IMP: step 1/2. In terms of biological role, plays an important role in the de novo pathway of purine nucleotide biosynthesis. Catalyzes the first committed step in the biosynthesis of AMP from IMP. In Rhodococcus erythropolis (strain PR4 / NBRC 100887), this protein is Adenylosuccinate synthetase.